A 1018-amino-acid polypeptide reads, in one-letter code: Fibronectin-binding protein A (1018 aa).

The N-terminal stretch at 1–36 (MKNNLRYGIRKHKLGAASVFLGTMIVVGMGQDKEAA) is a signal peptide. A YSIRK-G/S signaling motif motif is present at residues 7-18 (YGIRKHKLGAAS). The ligand-binding A region stretch occupies residues 37-511 (ASEQKTTTVE…SNKANGNGKN (475 aa)). Disordered regions lie at residues 38-61 (SEQK…SETQ) and 78-195 (ATVT…ETGT). Polar residues-rich tracts occupy residues 39 to 61 (EQKT…SETQ) and 78 to 92 (ATVT…QVTT). A compositionally biased stretch (basic and acidic residues) spans 112–126 (TVKEEVVKEEAKPQV). Positions 129-139 (TTQSQDNSGDQ) are enriched in polar residues. The segment at 194 to 511 (GTDVTSKVTV…SNKANGNGKN (318 aa)) is fibrinogen/elastin/tropoelastin-binding. The tract at residues 512 to 872 (GPIIQNNKFE…EGQQTIEEDT (361 aa)) is fibronectin-binding. Residues 545-574 (EEYDSSTLDIDYHTAIDGGGGYVDGYIETI) form a B-1 repeat. The 2 X approximate tandem repeats stretch occupies residues 545–604 (EEYDSSTLDIDYHTAIDGGGGYVDGYIETIEETDSSAIDIDYHTAVDSEAGHVGGYTESS). Residues 575–604 (EETDSSAIDIDYHTAVDSEAGHVGGYTESS) form a B-2 repeat. Disordered stretches follow at residues 595 to 622 (GHVG…NSKH), 740 to 813 (LGYE…DIDF), and 827 to 997 (EIIE…GMLF). One copy of the D-1 repeat lies at 745 to 782 (GQNSGNQSFEEDTEEDKPKYEQGGNIVDIDFDSVPQIH). A 4 X approximate tandem repeats region spans residues 745 to 878 (GQNSGNQSFE…EEDTTPPIVP (134 aa)). The stretch at 783 to 820 (GQNKGNQSFEEDTEKDKPKYEHGGNIIDIDFDSVPHIH) is one D-2 repeat. The D-3 repeat unit spans residues 821-859 (GFNKHTEIIEEDTNKDKPSYQFGGHNSVDFEEDTLPKVS). Positions 827–838 (EIIEEDTNKDKP) are enriched in basic and acidic residues. Residues 860–878 (GQNEGQQTIEEDTTPPIVP) form a D-4; truncated repeat. Pro residues predominate over residues 875-938 (PIVPPTPPTP…PAEPGKPVPP (64 aa)). 5 WR repeats span residues 879–892 (PTPP…EPET), 893–906 (PTPP…EPET), 907–920 (PTPP…EPET), 921–934 (PTPP…EPGK), and 935–948 (PVPP…KPSK). Residues 879–948 (PTPPTPEVPS…AKEEPKKPSK (70 aa)) form a 5 X tandem repeats, Pro-rich (WR) region. The LPXTG sorting signal motif lies at 982–986 (LPETG). Pentaglycyl murein peptidoglycan amidated threonine is present on threonine 985. The propeptide at 986–1018 (GGEESTNKGMLFGGLFSILGLALLRRNKKNHKA) is removed by sortase.

It is found in the secreted. The protein localises to the cell wall. Promotes bacterial attachment to multiple substrates, such as fibronectin (Fn), fibrinogen (Fg), elastin peptides and tropoelastin. This confers to S.aureus the ability to invade endothelial cells. Promotes adherence to and aggregation of activated platelets. In Staphylococcus aureus (strain USA300), this protein is Fibronectin-binding protein A.